Here is a 352-residue protein sequence, read N- to C-terminus: Glycerol-3-phosphate dehydrogenase 1-like protein (352 aa).

13–18 contributes to the NAD(+) binding site; sequence GSGNWG. Substrate is bound at residue Lys-123. An NAD(+)-binding site is contributed by Ala-156. The active-site Proton acceptor is Lys-207. The NAD(+) site is built by Arg-272, Lys-299, and Gln-301. 272 to 273 serves as a coordination point for substrate; the sequence is RN.

The protein belongs to the NAD-dependent glycerol-3-phosphate dehydrogenase family.

Its subcellular location is the cytoplasm. It catalyses the reaction sn-glycerol 3-phosphate + NAD(+) = dihydroxyacetone phosphate + NADH + H(+). Functionally, plays a role in regulating cardiac sodium current. The protein is Glycerol-3-phosphate dehydrogenase 1-like protein (gpd1l) of Xenopus tropicalis (Western clawed frog).